We begin with the raw amino-acid sequence, 737 residues long: Protein OPG064 (737 aa).

N-acetylmethionine; by host is present on methionine 1. A disulfide bridge connects residues cysteine 496 and cysteine 535.

The protein belongs to the orthopoxvirus OPG064 family. As to quaternary structure, interacts with host KLC2; this interaction promotes IEV trafficking by engaging the host kinesin-1 complex. Interacts with protein OPG056/F12. In terms of processing, N-acetylated on initiator methionine by host.

Plays a role in intracellular enveloped virus (IEV) transport to the cell surface on microtubules. Together with protein OPG056/F12, forms a complex that interacts with host KLC2 (kinesin light chain isoform 2) to engage the kinesin-1 complex and thereby promote IEV trafficking. The protein is Protein OPG064 (OPG064) of Bos taurus (Bovine).